The following is a 788-amino-acid chain: Structure-specific endonuclease subunit SLX4 (788 aa).

Disordered regions lie at residues 59-86, 562-584, and 599-622; these read LQNE…DNNR, KRQP…HDNS, and DLVN…PSSP. Basic and acidic residues predominate over residues 562 to 573; it reads KRQPVDSENEIR. Positions 612–622 are enriched in polar residues; the sequence is DTSVLQVPSSP.

This sequence belongs to the SLX4 family. As to quaternary structure, forms a heterodimer with SLX1. Post-translationally, phosphorylated in response to DNA damage.

Its subcellular location is the nucleus. Regulatory subunit of the SLX1-SLX4 structure-specific endonuclease that resolves DNA secondary structures generated during DNA repair and recombination. Has endonuclease activity towards branched DNA substrates, introducing single-strand cuts in duplex DNA close to junctions with ss-DNA. The polypeptide is Structure-specific endonuclease subunit SLX4 (Debaryomyces hansenii (strain ATCC 36239 / CBS 767 / BCRC 21394 / JCM 1990 / NBRC 0083 / IGC 2968) (Yeast)).